The primary structure comprises 535 residues: Xylan 1,3-beta-xylosidase (535 aa).

Aspartate 16 acts as the Proton acceptor in catalysis. Glutamate 189 serves as the catalytic Proton donor.

Belongs to the glycosyl hydrolase 43 family.

It carries out the reaction Hydrolysis of successive xylose residues from the non-reducing termini of (1-&gt;3)-beta-D-xylans.. Its activity is regulated as follows. Inhibited by Ag(+), Cu(2+), Hg(2+), Mn(2+), Pb(2+), Zn(2+) and p-chloromercuric benzoic acid. Functionally, beta-1,3-xylosidase that hydrolyzes beta-1,3-xylooligosaccharides to D-xylose. The polypeptide is Xylan 1,3-beta-xylosidase (xloA) (Vibrio sp).